We begin with the raw amino-acid sequence, 262 residues long: Acyl-[acyl-carrier-protein]--UDP-N-acetylglucosamine O-acyltransferase (262 aa).

This sequence belongs to the transferase hexapeptide repeat family. LpxA subfamily. As to quaternary structure, homotrimer.

The protein resides in the cytoplasm. It carries out the reaction a (3R)-hydroxyacyl-[ACP] + UDP-N-acetyl-alpha-D-glucosamine = a UDP-3-O-[(3R)-3-hydroxyacyl]-N-acetyl-alpha-D-glucosamine + holo-[ACP]. Its pathway is glycolipid biosynthesis; lipid IV(A) biosynthesis; lipid IV(A) from (3R)-3-hydroxytetradecanoyl-[acyl-carrier-protein] and UDP-N-acetyl-alpha-D-glucosamine: step 1/6. Involved in the biosynthesis of lipid A, a phosphorylated glycolipid that anchors the lipopolysaccharide to the outer membrane of the cell. The sequence is that of Acyl-[acyl-carrier-protein]--UDP-N-acetylglucosamine O-acyltransferase from Haemophilus influenzae (strain ATCC 51907 / DSM 11121 / KW20 / Rd).